A 748-amino-acid polypeptide reads, in one-letter code: Phosphoenolpyruvate-dependent phosphotransferase system (748 aa).

A GAF domain is found at 1-127 (MLTRLREIVE…RRQLLGVLVV (127 aa)). Residues 128–170 (QQRELRQYDESEESFLVTLATQMAAILSQSQVTALFGQYRQTR) are linker. The interval 171 to 748 (IRALPAAPGV…GMGGLIRGGL (578 aa)) is PTS EI. The Tele-phosphohistidine intermediate role is filled by histidine 356. Residues arginine 462 and arginine 498 each contribute to the phosphoenolpyruvate site. 2 residues coordinate Mg(2+): glutamate 597 and aspartate 621. Residues 620-621 (ND) and arginine 631 each bind phosphoenolpyruvate. Cysteine 668 (proton donor) is an active-site residue.

This sequence belongs to the PEP-utilizing enzyme family. Mg(2+) serves as cofactor.

It is found in the cytoplasm. The enzyme catalyses L-histidyl-[protein] + phosphoenolpyruvate = N(pros)-phospho-L-histidyl-[protein] + pyruvate. Component of the phosphoenolpyruvate-dependent nitrogen-metabolic phosphotransferase system (nitrogen-metabolic PTS), that seems to be involved in regulating nitrogen metabolism. Enzyme I-Ntr transfers the phosphoryl group from phosphoenolpyruvate (PEP) to the phosphoryl carrier protein (NPr). Could function in the transcriptional regulation of sigma-54 dependent operons in conjunction with the NPr (PtsO) and EIIA-Ntr (PtsN) proteins. Enzyme I-Ntr is specific for NPr. This is Phosphoenolpyruvate-dependent phosphotransferase system (ptsP) from Salmonella typhimurium (strain LT2 / SGSC1412 / ATCC 700720).